A 71-amino-acid chain; its full sequence is MPSVKIKENEPFDVALRRFKRSCEKAGILSEVRRREFYEKPTSERKRKLAAAVKRHAKKVQREQRRFERLY.

It belongs to the bacterial ribosomal protein bS21 family.

The sequence is that of Small ribosomal subunit protein bS21 from Hahella chejuensis (strain KCTC 2396).